We begin with the raw amino-acid sequence, 916 residues long: Translation initiation factor IF-2 (916 aa).

A disordered region spans residues 55-324 (EPKAVTPTSK…NHNANLKPVT (270 aa)). Low complexity predominate over residues 77-88 (AAEPKAAATKPA). Basic and acidic residues-rich tracts occupy residues 98–121 (FKAE…ERRN), 129–161 (RQKD…DNRN), and 198–212 (RQSE…EAKR). Over residues 227–250 (KEQPTVEAAATAAPQAQPQTVEQV) the composition is skewed to low complexity. Positions 264-281 (ARPDKSRDFSHENEDGPK) are enriched in basic and acidic residues. Residues 291 to 304 (KQNQVRNQKNSNWN) show a composition bias toward low complexity. The span at 305 to 314 (KKNKKSKNNR) shows a compositional bias: basic residues. The 168-residue stretch at 418–585 (ERAPVVTIMG…TVLLVAEIQE (168 aa)) folds into the tr-type G domain. The segment at 427-434 (GHVDHGKT) is G1. 427–434 (GHVDHGKT) provides a ligand contact to GTP. The tract at residues 452 to 456 (GITQH) is G2. A G3 region spans residues 473–476 (DTPG). GTP-binding positions include 473 to 477 (DTPGH) and 527 to 530 (NKID). Residues 527 to 530 (NKID) are G4. The segment at 563–565 (SAK) is G5.

Belongs to the TRAFAC class translation factor GTPase superfamily. Classic translation factor GTPase family. IF-2 subfamily.

Its subcellular location is the cytoplasm. One of the essential components for the initiation of protein synthesis. Protects formylmethionyl-tRNA from spontaneous hydrolysis and promotes its binding to the 30S ribosomal subunits. Also involved in the hydrolysis of GTP during the formation of the 70S ribosomal complex. This chain is Translation initiation factor IF-2, found in Streptococcus mutans serotype c (strain ATCC 700610 / UA159).